The sequence spans 277 residues: NADPH-dependent 7-cyano-7-deazaguanine reductase (277 aa).

A substrate-binding site is contributed by 83-85; the sequence is VES. 85–86 serves as a coordination point for NADPH; that stretch reads SK. Cys-184 functions as the Thioimide intermediate in the catalytic mechanism. The active-site Proton donor is the Asp-191. 223 to 224 provides a ligand contact to substrate; the sequence is HE. 252–253 contributes to the NADPH binding site; the sequence is RG.

This sequence belongs to the GTP cyclohydrolase I family. QueF type 2 subfamily. In terms of assembly, homodimer.

It localises to the cytoplasm. It carries out the reaction 7-aminomethyl-7-carbaguanine + 2 NADP(+) = 7-cyano-7-deazaguanine + 2 NADPH + 3 H(+). It participates in tRNA modification; tRNA-queuosine biosynthesis. Its function is as follows. Catalyzes the NADPH-dependent reduction of 7-cyano-7-deazaguanine (preQ0) to 7-aminomethyl-7-deazaguanine (preQ1). The sequence is that of NADPH-dependent 7-cyano-7-deazaguanine reductase from Cupriavidus metallidurans (strain ATCC 43123 / DSM 2839 / NBRC 102507 / CH34) (Ralstonia metallidurans).